Here is a 305-residue protein sequence, read N- to C-terminus: UPF0612 protein C337.02c (305 aa).

Coiled-coil stretches lie at residues 27 to 63 and 120 to 207; these read IERY…MKYE and NDMN…DARS.

This sequence belongs to the UPF0612 family.

This chain is UPF0612 protein C337.02c, found in Schizosaccharomyces pombe (strain 972 / ATCC 24843) (Fission yeast).